The following is a 509-amino-acid chain: Lanosterol 14-alpha demethylase (509 aa).

Residues 30–50 (GNLLSMLLIACAFTLSLVYLF) form a helical membrane-spanning segment. Cysteine 455 contributes to the heme binding site.

Belongs to the cytochrome P450 family. Heme serves as cofactor. Ubiquitinated by MARCHF6, leading to proteasomal degradation.

Its subcellular location is the endoplasmic reticulum membrane. It is found in the microsome membrane. The catalysed reaction is a 14alpha-methyl steroid + 3 reduced [NADPH--hemoprotein reductase] + 3 O2 = a Delta(14) steroid + formate + 3 oxidized [NADPH--hemoprotein reductase] + 4 H2O + 4 H(+). It catalyses the reaction lanosterol + 3 reduced [NADPH--hemoprotein reductase] + 3 O2 = 4,4-dimethyl-5alpha-cholesta-8,14,24-trien-3beta-ol + formate + 3 oxidized [NADPH--hemoprotein reductase] + 4 H2O + 4 H(+). The enzyme catalyses 24,25-dihydrolanosterol + 3 reduced [NADPH--hemoprotein reductase] + 3 O2 = 4,4-dimethyl-8,14-cholestadien-3beta-ol + formate + 3 oxidized [NADPH--hemoprotein reductase] + 4 H2O + 4 H(+). It carries out the reaction a 14alpha-methyl steroid + reduced [NADPH--hemoprotein reductase] + O2 = a 14alpha-hydroxymethyl steroid + oxidized [NADPH--hemoprotein reductase] + H2O + H(+). The catalysed reaction is a 14alpha-hydroxymethyl steroid + reduced [NADPH--hemoprotein reductase] + O2 = a 14alpha-formyl steroid + oxidized [NADPH--hemoprotein reductase] + 2 H2O + H(+). It catalyses the reaction a 14alpha-formyl steroid + reduced [NADPH--hemoprotein reductase] + O2 = a Delta(14) steroid + formate + oxidized [NADPH--hemoprotein reductase] + H2O + 2 H(+). The enzyme catalyses lanosterol + reduced [NADPH--hemoprotein reductase] + O2 = 32-hydroxylanosterol + oxidized [NADPH--hemoprotein reductase] + H2O + H(+). It carries out the reaction 32-hydroxylanosterol + reduced [NADPH--hemoprotein reductase] + O2 = 32-oxolanosterol + oxidized [NADPH--hemoprotein reductase] + 2 H2O + H(+). The catalysed reaction is 32-oxolanosterol + reduced [NADPH--hemoprotein reductase] + O2 = 4,4-dimethyl-5alpha-cholesta-8,14,24-trien-3beta-ol + formate + oxidized [NADPH--hemoprotein reductase] + H2O + 2 H(+). It catalyses the reaction 24,25-dihydrolanosterol + reduced [NADPH--hemoprotein reductase] + O2 = 32-hydroxy-24,25-dihydrolanosterol + oxidized [NADPH--hemoprotein reductase] + H2O + H(+). The enzyme catalyses 32-hydroxy-24,25-dihydrolanosterol + reduced [NADPH--hemoprotein reductase] + O2 = 32-oxo-24,25-dihydrolanosterol + oxidized [NADPH--hemoprotein reductase] + 2 H2O + H(+). It carries out the reaction 32-oxo-24,25-dihydrolanosterol + reduced [NADPH--hemoprotein reductase] + O2 = 4,4-dimethyl-8,14-cholestadien-3beta-ol + formate + oxidized [NADPH--hemoprotein reductase] + H2O + 2 H(+). Its pathway is steroid biosynthesis; zymosterol biosynthesis; zymosterol from lanosterol: step 1/6. With respect to regulation, inhibited by azalanstat. Inhibited by azole antifungal agents ketoconazole, itraconazole and fluconazole. Its function is as follows. Sterol 14alpha-demethylase that plays a critical role in the cholesterol biosynthesis pathway, being cholesterol the major sterol component in mammalian membranes as well as a precursor for bile acid and steroid hormone synthesis. Cytochrome P450 monooxygenase that catalyzes the three-step oxidative removal of the 14alpha-methyl group (C-32) of sterols such as lanosterol (lanosta-8,24-dien-3beta-ol) and 24,25-dihydrolanosterol (DHL) in the form of formate, and converts the sterols to 4,4-dimethyl-5alpha-cholesta-8,14,24-trien-3beta-ol and 4,4-dimethyl-8,14-cholestadien-3beta-ol, respectively, which are intermediates of cholesterol biosynthesis. Can also demethylate substrates not intrinsic to mammals, such as eburicol (24-methylene-24,25-dihydrolanosterol), but at a lower rate than DHL. The chain is Lanosterol 14-alpha demethylase from Pongo abelii (Sumatran orangutan).